A 161-amino-acid polypeptide reads, in one-letter code: uncharacterized protein (161 aa).

The span at 1–16 (MPRAGRAPAEGGPAPG) shows a compositional bias: low complexity. Disordered regions lie at residues 1–23 (MPRAGRAPAEGGPAPGTRSSRCL), 50–91 (GRPV…TQSA), and 140–161 (RGPACGSTAQWPPRGDPTWRIS).

This is an uncharacterized protein from Homo sapiens (Human).